The primary structure comprises 347 residues: tRNA N6-adenosine threonylcarbamoyltransferase (347 aa).

2 residues coordinate Fe cation: His-111 and His-115. Residues 134–138 (LVSGG), Asp-167, Gly-180, and Asn-277 each bind substrate. Asp-305 serves as a coordination point for Fe cation.

The protein belongs to the KAE1 / TsaD family. It depends on Fe(2+) as a cofactor.

The protein localises to the cytoplasm. It catalyses the reaction L-threonylcarbamoyladenylate + adenosine(37) in tRNA = N(6)-L-threonylcarbamoyladenosine(37) in tRNA + AMP + H(+). Functionally, required for the formation of a threonylcarbamoyl group on adenosine at position 37 (t(6)A37) in tRNAs that read codons beginning with adenine. Is involved in the transfer of the threonylcarbamoyl moiety of threonylcarbamoyl-AMP (TC-AMP) to the N6 group of A37, together with TsaE and TsaB. TsaD likely plays a direct catalytic role in this reaction. This chain is tRNA N6-adenosine threonylcarbamoyltransferase, found in Ralstonia pickettii (strain 12J).